Reading from the N-terminus, the 299-residue chain is Delta-9 desaturase-like 3 protein (299 aa).

The next 2 membrane-spanning stretches (helical) occupy residues Ala-38 to Ala-57 and Phe-58 to Tyr-76. A Histidine box-1 motif is present at residues His-77–His-82. The Histidine box-2 motif lies at His-114 to His-118. The next 2 membrane-spanning stretches (helical) occupy residues Ile-174–Leu-194 and Val-198–Ile-218. The Histidine box-3 signature appears at His-246 to His-250. Residues Trp-262–Thr-282 form a helical membrane-spanning segment.

This sequence belongs to the fatty acid desaturase type 1 family. The cofactor is Fe cation.

Its subcellular location is the endoplasmic reticulum membrane. Its pathway is lipid metabolism; polyunsaturated fatty acid biosynthesis. This chain is Delta-9 desaturase-like 3 protein, found in Arabidopsis thaliana (Mouse-ear cress).